Consider the following 194-residue polypeptide: Large ribosomal subunit protein bL9 (194 aa).

It belongs to the bacterial ribosomal protein bL9 family.

In terms of biological role, binds to the 23S rRNA. In Paracoccus denitrificans (strain Pd 1222), this protein is Large ribosomal subunit protein bL9.